The sequence spans 154 residues: Endoribonuclease YbeY (154 aa).

H113, H117, and H123 together coordinate Zn(2+).

It belongs to the endoribonuclease YbeY family. Zn(2+) is required as a cofactor.

The protein resides in the cytoplasm. Single strand-specific metallo-endoribonuclease involved in late-stage 70S ribosome quality control and in maturation of the 3' terminus of the 16S rRNA. This chain is Endoribonuclease YbeY, found in Aeromonas salmonicida (strain A449).